A 27-amino-acid polypeptide reads, in one-letter code: Histone H1.3, embryonic (27 aa).

The 27-residue stretch at 1–27 (HVVAAITALKERGGSSHQALKKYKAAN) folds into the H15 domain.

The protein belongs to the histone H1/H5 family.

It localises to the nucleus. The protein resides in the chromosome. Histones H1 are necessary for the condensation of nucleosome chains into higher-order structures. The chain is Histone H1.3, embryonic from Parechinus angulosus (Angulate sea urchin).